The primary structure comprises 735 residues: Stonin-1 (735 aa).

Positions 1–35 (MCSTNPGKWVTFDDDPAVQSSQKSKNFPLENQGVC) are disordered. Residues 275-408 (GWSFMLRIPE…KLPAVSKPKK (134 aa)) form the SHD domain. An MHD domain is found at 412 to 715 (EQEISLEIVD…ACYNIQVEIE (304 aa)).

This sequence belongs to the Stoned B family. In terms of tissue distribution, ubiquitous.

The protein resides in the cytoplasm. The protein localises to the membrane. May be involved in the endocytic machinery. This Homo sapiens (Human) protein is Stonin-1 (STON1).